Here is a 275-residue protein sequence, read N- to C-terminus: TATA-box-binding protein (275 aa).

Disordered stretches follow at residues 23–45 and 73–92; these read EDES…FGMN and GSMS…HTPA. 2 repeat units span residues 103-179 and 193-270.

The protein belongs to the TBP family. As to quaternary structure, belongs to the TFIID complex together with the TBP-associated factors (TAFs). Binds DNA as monomer.

The protein localises to the nucleus. Functionally, general transcription factor that functions at the core of the DNA-binding multiprotein factor TFIID. Binding of TFIID to the TATA box is the initial transcriptional step of the pre-initiation complex (PIC), playing a role in the activation of eukaryotic genes transcribed by RNA polymerase II. This Artemia franciscana (Brine shrimp) protein is TATA-box-binding protein.